Reading from the N-terminus, the 249-residue chain is Metallo-beta-lactamase type 2 (249 aa).

Positions 1-22 (MMKKMKWALVLALGLTGLNAFG) are cleaved as a signal peptide. 5 residues coordinate Zn(2+): His98, His100, Asp102, His161, and Cys180. Lys183 contacts substrate. His222 contacts Zn(2+).

Belongs to the metallo-beta-lactamase superfamily. Class-B beta-lactamase family. As to quaternary structure, monomer. It depends on Zn(2+) as a cofactor.

The protein resides in the periplasm. The catalysed reaction is a beta-lactam + H2O = a substituted beta-amino acid. In terms of biological role, confers resistance to the different beta-lactams antibiotics (penicillin, cephalosporin and carbapenem) via the hydrolysis of the beta-lactam ring. The sequence is that of Metallo-beta-lactamase type 2 (blaB4) from Elizabethkingia meningoseptica (Chryseobacterium meningosepticum).